Here is a 500-residue protein sequence, read N- to C-terminus: Maturase K (500 aa).

It belongs to the intron maturase 2 family. MatK subfamily.

Its subcellular location is the plastid. The protein resides in the chloroplast. Functionally, usually encoded in the trnK tRNA gene intron. Probably assists in splicing its own and other chloroplast group II introns. The polypeptide is Maturase K (Adiantum capillus-veneris (Maidenhair fern)).